Here is an 87-residue protein sequence, read N- to C-terminus: Putative sodium channel toxin Ts38 (87 aa).

An N-terminal signal peptide occupies residues 1 to 22; sequence MKHLKFYSILFLFSIFVYKVNA. 3 cysteine pairs are disulfide-bonded: C42/C65, C51/C72, and C55/C74.

This sequence belongs to the long (3 C-C) scorpion toxin superfamily. Sodium channel inhibitor family. In terms of tissue distribution, expressed by the venom gland.

It is found in the secreted. In terms of biological role, putative sodium channel toxin. This Tityus serrulatus (Brazilian scorpion) protein is Putative sodium channel toxin Ts38.